A 396-amino-acid chain; its full sequence is NADH-quinone oxidoreductase subunit D (396 aa).

It belongs to the complex I 49 kDa subunit family. In terms of assembly, NDH-1 is composed of 14 different subunits. Subunits NuoB, C, D, E, F, and G constitute the peripheral sector of the complex.

Its subcellular location is the cell inner membrane. It carries out the reaction a quinone + NADH + 5 H(+)(in) = a quinol + NAD(+) + 4 H(+)(out). NDH-1 shuttles electrons from NADH, via FMN and iron-sulfur (Fe-S) centers, to quinones in the respiratory chain. The immediate electron acceptor for the enzyme in this species is believed to be ubiquinone. Couples the redox reaction to proton translocation (for every two electrons transferred, four hydrogen ions are translocated across the cytoplasmic membrane), and thus conserves the redox energy in a proton gradient. The polypeptide is NADH-quinone oxidoreductase subunit D (Brucella melitensis biotype 1 (strain ATCC 23456 / CCUG 17765 / NCTC 10094 / 16M)).